The primary structure comprises 544 residues: Glucose-6-phosphate isomerase (544 aa).

The Proton donor role is filled by Glu-354. Catalysis depends on residues His-385 and Lys-510.

Belongs to the GPI family.

The protein resides in the cytoplasm. The catalysed reaction is alpha-D-glucose 6-phosphate = beta-D-fructose 6-phosphate. It functions in the pathway carbohydrate biosynthesis; gluconeogenesis. It participates in carbohydrate degradation; glycolysis; D-glyceraldehyde 3-phosphate and glycerone phosphate from D-glucose: step 2/4. Its function is as follows. Catalyzes the reversible isomerization of glucose-6-phosphate to fructose-6-phosphate. This chain is Glucose-6-phosphate isomerase, found in Deinococcus deserti (strain DSM 17065 / CIP 109153 / LMG 22923 / VCD115).